Here is a 534-residue protein sequence, read N- to C-terminus: Probable protein kinase UbiB (534 aa).

Residues 23 to 43 (DLLFDLPLPWFLLALRYVLPW) traverse the membrane as a helical segment. One can recognise a Protein kinase domain in the interval 125–492 (RFDVEPLASA…WKKRKDDWFL (368 aa)). ATP contacts are provided by residues 131 to 139 (LASASVAQV) and Lys-153. The active-site Proton acceptor is Asp-288. 2 consecutive transmembrane segments (helical) span residues 490 to 510 (WFLRLLGSAHLAGGTILAAGG) and 512 to 532 (LHELGHWPAGIMVAVGLYLVV).

This sequence belongs to the ABC1 family. UbiB subfamily.

It localises to the cell inner membrane. The protein operates within cofactor biosynthesis; ubiquinone biosynthesis [regulation]. Is probably a protein kinase regulator of UbiI activity which is involved in aerobic coenzyme Q (ubiquinone) biosynthesis. This is Probable protein kinase UbiB from Pseudomonas fluorescens (strain Pf0-1).